The primary structure comprises 270 residues: Formamidopyrimidine-DNA glycosylase (270 aa).

Pro-2 acts as the Schiff-base intermediate with DNA in catalysis. Glu-3 functions as the Proton donor in the catalytic mechanism. Lys-58 functions as the Proton donor; for beta-elimination activity in the catalytic mechanism. The DNA site is built by His-91, Arg-110, and Arg-151. Residues 236-270 (FVYGRGGQPCKVCGTALREVKLGQRASVYCPRCQR) form an FPG-type zinc finger. Arg-260 (proton donor; for delta-elimination activity) is an active-site residue.

It belongs to the FPG family. In terms of assembly, monomer. It depends on Zn(2+) as a cofactor.

It catalyses the reaction Hydrolysis of DNA containing ring-opened 7-methylguanine residues, releasing 2,6-diamino-4-hydroxy-5-(N-methyl)formamidopyrimidine.. The enzyme catalyses 2'-deoxyribonucleotide-(2'-deoxyribose 5'-phosphate)-2'-deoxyribonucleotide-DNA = a 3'-end 2'-deoxyribonucleotide-(2,3-dehydro-2,3-deoxyribose 5'-phosphate)-DNA + a 5'-end 5'-phospho-2'-deoxyribonucleoside-DNA + H(+). Functionally, involved in base excision repair of DNA damaged by oxidation or by mutagenic agents. Acts as a DNA glycosylase that recognizes and removes damaged bases. Has a preference for oxidized purines, such as 7,8-dihydro-8-oxoguanine (8-oxoG). Has AP (apurinic/apyrimidinic) lyase activity and introduces nicks in the DNA strand. Cleaves the DNA backbone by beta-delta elimination to generate a single-strand break at the site of the removed base with both 3'- and 5'-phosphates. In Pseudomonas putida (strain GB-1), this protein is Formamidopyrimidine-DNA glycosylase.